Reading from the N-terminus, the 475-residue chain is Putative aldehyde dehydrogenase SSP0762 (475 aa).

Position 201–207 (201–207 (GDGQGVG)) interacts with NAD(+). Catalysis depends on residues E245 and C279.

Belongs to the aldehyde dehydrogenase family.

It carries out the reaction an aldehyde + NAD(+) + H2O = a carboxylate + NADH + 2 H(+). The polypeptide is Putative aldehyde dehydrogenase SSP0762 (Staphylococcus saprophyticus subsp. saprophyticus (strain ATCC 15305 / DSM 20229 / NCIMB 8711 / NCTC 7292 / S-41)).